The chain runs to 187 residues: Large ribosomal subunit protein uL5 (187 aa).

The protein belongs to the universal ribosomal protein uL5 family. Part of the 50S ribosomal subunit; part of the 5S rRNA/L5/L18/L25 subcomplex. Contacts the 5S rRNA and the P site tRNA. Forms a bridge to the 30S subunit in the 70S ribosome.

Its function is as follows. This is one of the proteins that bind and probably mediate the attachment of the 5S RNA into the large ribosomal subunit, where it forms part of the central protuberance. In the 70S ribosome it contacts protein S13 of the 30S subunit (bridge B1b), connecting the 2 subunits; this bridge is implicated in subunit movement. Contacts the P site tRNA; the 5S rRNA and some of its associated proteins might help stabilize positioning of ribosome-bound tRNAs. In Mycobacterium leprae (strain Br4923), this protein is Large ribosomal subunit protein uL5.